We begin with the raw amino-acid sequence, 110 residues long: UPF0060 membrane protein Haur_1798 (110 aa).

Transmembrane regions (helical) follow at residues 7-27, 33-53, 63-83, and 89-109; these read VVLFILAGLAEIAGGYLVWQW, SIWFGVLGAILLVGYGFLPTL, VYAAYGGVFIVLSLAWGWLID, and QPSLVGACLALVGAAIILYWP.

This sequence belongs to the UPF0060 family.

It localises to the cell membrane. This Herpetosiphon aurantiacus (strain ATCC 23779 / DSM 785 / 114-95) protein is UPF0060 membrane protein Haur_1798.